The sequence spans 163 residues: Succinate dehydrogenase assembly factor 2-A, mitochondrial (163 aa).

Residues 1–23 (MLRQLRLTMDISGWIFLPWRRSM) constitute a mitochondrion transit peptide.

Belongs to the SDHAF2 family. Interacts with the flavoprotein subunit within the SDH catalytic dimer.

Its subcellular location is the mitochondrion matrix. Functionally, plays an essential role in the assembly of succinate dehydrogenase (SDH), an enzyme complex (also referred to as respiratory complex II) that is a component of both the tricarboxylic acid (TCA) cycle and the mitochondrial electron transport chain, and which couples the oxidation of succinate to fumarate with the reduction of ubiquinone (coenzyme Q) to ubiquinol. Required for flavinylation (covalent attachment of FAD) of the flavoprotein subunit of the SDH catalytic dimer. The protein is Succinate dehydrogenase assembly factor 2-A, mitochondrial of Drosophila sechellia (Fruit fly).